The chain runs to 173 residues: Plasmolipin (173 aa).

The Cytoplasmic segment spans residues 1–34; the sequence is MADFPGKVSTQTSSQEPQRSFAISSSVDMGFIKS. Positions 31–160 constitute an MARVEL domain; sequence FIKSIPGILL…SSYFAYLGWR (130 aa). A helical membrane pass occupies residues 35-55; that stretch reads IPGILLIAEIVVGLLVWTLIA. Residues 56-67 lie on the Extracellular side of the membrane; it reads STPHYLIPALGW. A helical transmembrane segment spans residues 68 to 88; the sequence is VLFVSITLWLLSIALLVILLL. Residues 89 to 98 are Cytoplasmic-facing; sequence SLHQRLPSVP. A helical transmembrane segment spans residues 99 to 119; sequence WPLVLLVFYSVAALLYLTAFL. Over 120–138 the chain is Extracellular; the sequence is ANAATVPGGYYQGHLGASA. A helical transmembrane segment spans residues 139-159; sequence FFGIVETLLYTASSYFAYLGW. Residues 160–173 lie on the Cytoplasmic side of the membrane; that stretch reads RGEGQNAAGSTVPV.

Belongs to the MAL family. As to quaternary structure, forms oligomers. As to expression, expressed in the posterior midgut.

Its subcellular location is the cell membrane. The protein localises to the myelin membrane. The protein resides in the apical cell membrane. It localises to the recycling endosome membrane. It is found in the vesicle. In terms of biological role, main component of the myelin sheath that plays an important role in myelin membrane biogenesis and myelination. Plays an essential function in apical endocytosis. Plays an important role by activating the Notch signaling pathway, which is essential for cell differentiation and results in correct patterning of the intestinal epithelium, particularly of the posterior gut absorptive cells. This is Plasmolipin (pllp) from Danio rerio (Zebrafish).